The sequence spans 253 residues: 5'-nucleotidase SurE (253 aa).

Aspartate 8, aspartate 9, serine 40, and asparagine 93 together coordinate a divalent metal cation.

The protein belongs to the SurE nucleotidase family. Requires a divalent metal cation as cofactor.

It localises to the cytoplasm. It catalyses the reaction a ribonucleoside 5'-phosphate + H2O = a ribonucleoside + phosphate. Its function is as follows. Nucleotidase that shows phosphatase activity on nucleoside 5'-monophosphates. The sequence is that of 5'-nucleotidase SurE from Haemophilus ducreyi (strain 35000HP / ATCC 700724).